Consider the following 241-residue polypeptide: Peroxisomal membrane protein 11C (241 aa).

The Cytoplasmic segment spans residues 1 to 122 (MALLNRLASA…ADAKVLRVDS (122 aa)). Residues 123-149 (AWWWTLNTALWTLSLLLGAVKALWTML) form a helical membrane-spanning segment. Residues 150 to 211 (KLRQKLRSPT…GVLWAGRFPP (62 aa)) are Lumenal-facing. The chain crosses the membrane as a helical span at residues 212-227 (WLVGLMGTISSILSTC). At 228 to 241 (QAVRAGRQAEADSP) the chain is on the cytoplasmic side.

It belongs to the peroxin-11 family. As to quaternary structure, homodimer. Heterodimer with either PEX11A or PEX11B. Interacts with FIS1. In terms of tissue distribution, expressed in liver and at much lower levels in heart, kidney and testis.

It is found in the peroxisome membrane. Functionally, promotes membrane protrusion and elongation on the peroxisomal surface. The polypeptide is Peroxisomal membrane protein 11C (Pex11g) (Mus musculus (Mouse)).